The following is a 148-amino-acid chain: Nucleoside diphosphate kinase 1 (148 aa).

ATP is bound by residues K9, F57, R85, T91, R102, and N112. H115 acts as the Pros-phosphohistidine intermediate in catalysis.

It belongs to the NDK family. Requires Mg(2+) as cofactor.

The enzyme catalyses a 2'-deoxyribonucleoside 5'-diphosphate + ATP = a 2'-deoxyribonucleoside 5'-triphosphate + ADP. It catalyses the reaction a ribonucleoside 5'-diphosphate + ATP = a ribonucleoside 5'-triphosphate + ADP. In terms of biological role, major role in the synthesis of nucleoside triphosphates other than ATP. The ATP gamma phosphate is transferred to the NDP beta phosphate via a ping-pong mechanism, using a phosphorylated active-site intermediate. The chain is Nucleoside diphosphate kinase 1 from Nicotiana tabacum (Common tobacco).